A 233-amino-acid polypeptide reads, in one-letter code: Small ribosomal subunit protein uS2 (233 aa).

This sequence belongs to the universal ribosomal protein uS2 family.

The sequence is that of Small ribosomal subunit protein uS2 from Bacillus cereus (strain G9842).